The following is a 339-amino-acid chain: Protein RecA (339 aa).

73-80 (GPESSGKT) serves as a coordination point for ATP.

It belongs to the RecA family.

It is found in the cytoplasm. Can catalyze the hydrolysis of ATP in the presence of single-stranded DNA, the ATP-dependent uptake of single-stranded DNA by duplex DNA, and the ATP-dependent hybridization of homologous single-stranded DNAs. It interacts with LexA causing its activation and leading to its autocatalytic cleavage. This Mycoplasmopsis pulmonis (strain UAB CTIP) (Mycoplasma pulmonis) protein is Protein RecA.